The sequence spans 128 residues: V-type proton ATPase subunit F (128 aa).

This sequence belongs to the V-ATPase F subunit family. In terms of assembly, V-ATPase is a heteromultimeric enzyme composed of a peripheral catalytic V1 complex (components A to H) attached to an integral membrane V0 proton pore complex (components: a, c, c'', d and e).

Its subcellular location is the vacuole membrane. Its function is as follows. Subunit of the peripheral V1 complex of vacuolar ATPase essential for assembly or catalytic function. V-ATPase is responsible for acidifying a variety of intracellular compartments in eukaryotic cells. This is V-type proton ATPase subunit F (VHA-F) from Arabidopsis thaliana (Mouse-ear cress).